A 72-amino-acid chain; its full sequence is Bowman-Birk type proteinase inhibitor 2a (72 aa).

7 disulfides stabilise this stretch: Cys-8/Cys-61, Cys-9/Cys-24, Cys-12/Cys-57, Cys-14/Cys-22, Cys-31/Cys-38, Cys-35/Cys-50, and Cys-40/Cys-48.

In terms of assembly, dimer.

In terms of biological role, inhibits trypsin (IC(50)=0.9 nM) and alpha-chymotrypsin (IC(50)=1.1 nM). In Lathyrus sativus (White vetchling), this protein is Bowman-Birk type proteinase inhibitor 2a.